The sequence spans 51 residues: Ovomucoid (51 aa).

A Kazal-like domain is found at 3–51; the sequence is VDCSGYPKPACTLEYFPLCGSDNQTYANKCTFCNAVVEKNVTLNHLGEC. Disulfide bonds link Cys-5-Cys-35, Cys-13-Cys-32, and Cys-21-Cys-51. N-linked (GlcNAc...) asparagine glycosylation is present at Asn-42.

The protein resides in the secreted. This Nothoprocta perdicaria (Chilean tinamou) protein is Ovomucoid.